A 153-amino-acid chain; its full sequence is S-ribosylhomocysteine lyase (153 aa).

Fe cation-binding residues include His57, His61, and Cys124.

It belongs to the LuxS family. In terms of assembly, homodimer. It depends on Fe cation as a cofactor.

The catalysed reaction is S-(5-deoxy-D-ribos-5-yl)-L-homocysteine = (S)-4,5-dihydroxypentane-2,3-dione + L-homocysteine. In terms of biological role, involved in the synthesis of autoinducer 2 (AI-2) which is secreted by bacteria and is used to communicate both the cell density and the metabolic potential of the environment. The regulation of gene expression in response to changes in cell density is called quorum sensing. Catalyzes the transformation of S-ribosylhomocysteine (RHC) to homocysteine (HC) and 4,5-dihydroxy-2,3-pentadione (DPD). The sequence is that of S-ribosylhomocysteine lyase from Oceanobacillus iheyensis (strain DSM 14371 / CIP 107618 / JCM 11309 / KCTC 3954 / HTE831).